The chain runs to 180 residues: Large ribosomal subunit protein uL6 (180 aa).

The protein belongs to the universal ribosomal protein uL6 family. In terms of assembly, part of the 50S ribosomal subunit.

In terms of biological role, this protein binds to the 23S rRNA, and is important in its secondary structure. It is located near the subunit interface in the base of the L7/L12 stalk, and near the tRNA binding site of the peptidyltransferase center. This Mesoplasma florum (strain ATCC 33453 / NBRC 100688 / NCTC 11704 / L1) (Acholeplasma florum) protein is Large ribosomal subunit protein uL6.